The following is a 122-amino-acid chain: Holo-[acyl-carrier-protein] synthase (122 aa).

Asp8 and Glu57 together coordinate Mg(2+).

The protein belongs to the P-Pant transferase superfamily. AcpS family. Mg(2+) is required as a cofactor.

The protein resides in the cytoplasm. The enzyme catalyses apo-[ACP] + CoA = holo-[ACP] + adenosine 3',5'-bisphosphate + H(+). Functionally, transfers the 4'-phosphopantetheine moiety from coenzyme A to a Ser of acyl-carrier-protein. The sequence is that of Holo-[acyl-carrier-protein] synthase from Exiguobacterium sp. (strain ATCC BAA-1283 / AT1b).